The following is a 170-amino-acid chain: Interferon gamma (170 aa).

An N-terminal signal peptide occupies residues 1–20 (MNSRLCIMALLLCFSQALLG). Residues N36 and N103 are each glycosylated (N-linked (GlcNAc...) asparagine).

Belongs to the type II (or gamma) interferon family. Homodimer. Interacts with IFNGR1 (via extracellular domain); this interaction promotes IFNGR1 dimerization. In terms of tissue distribution, released primarily from activated T lymphocytes.

It localises to the secreted. Functionally, type II interferon produced by immune cells such as T-cells and NK cells that plays crucial roles in antimicrobial, antiviral, and antitumor responses by activating effector immune cells and enhancing antigen presentation. Primarily signals through the JAK-STAT pathway after interaction with its receptor IFNGR1 to affect gene regulation. Upon IFNG binding, IFNGR1 intracellular domain opens out to allow association of downstream signaling components JAK2, JAK1 and STAT1, leading to STAT1 activation, nuclear translocation and transcription of IFNG-regulated genes. Many of the induced genes are transcription factors such as IRF1 that are able to further drive regulation of a next wave of transcription. Plays a role in class I antigen presentation pathway by inducing a replacement of catalytic proteasome subunits with immunoproteasome subunits. In turn, increases the quantity, quality, and repertoire of peptides for class I MHC loading. Increases the efficiency of peptide generation also by inducing the expression of activator PA28 that associates with the proteasome and alters its proteolytic cleavage preference. Up-regulates as well MHC II complexes on the cell surface by promoting expression of several key molecules such as cathepsins B/CTSB, H/CTSH, and L/CTSL. Participates in the regulation of hematopoietic stem cells during development and under homeostatic conditions by affecting their development, quiescence, and differentiation. The sequence is that of Interferon gamma (IFNG) from Sigmodon hispidus (Hispid cotton rat).